Reading from the N-terminus, the 492-residue chain is MGGRRGPNRTSYCRNPLCEPGSSGGSSGSHTSSASVTSVRSRTRSSSGTGLSSPPLATQTVVPLQHCKIPELPVQASILFELQLFFCQLIALFVHYINIYKTVWWYPPSHPPSHTSLNFHLIDFNLLMVTTIVLGRRFIGSIVKEASQRGKVSLFRSILLFLTRFTVLTATGWSLCRSLIHLFRTYSFLNLLFLCYPFGMYIPFLQLNCDLRKTSLFNHMASMGPREAVSGLAKSRDYLLTLRETWKQHTRQLYGPDAMPTHACCLSPSLIRSEVEFLKMDFNWRMKEVLVSSMLSAYYVAFVPVWFVKNTHYYDKRWSCELFLLVSISTSVILMQHLLPASYCDLLHKAAAHLGCWQKVDPALCSNVLQHPWTEECMWPQGVLVKHSKNVYKAVGHYNVAIPSDVSHFRFHFFFSKPLRILNILLLLEGAVIVYQLYSLMSSEKWHQTISLALILFSNYYAFFKLLRDRLVLGKAYSYSASPQRDLDHRFS.

A disordered region spans residues 1–54 (MGGRRGPNRTSYCRNPLCEPGSSGGSSGSHTSSASVTSVRSRTRSSSGTGLSSP). The N-linked (GlcNAc...) asparagine glycan is linked to Asn8. The segment covering 28–53 (GSHTSSASVTSVRSRTRSSSGTGLSS) has biased composition (low complexity). Helical transmembrane passes span 77–97 (SILF…VHYI), 115–135 (TSLN…IVLG), 153–175 (SLFR…GWSL), 185–205 (TYSF…IPFL), 288–308 (EVLV…VWFV), 322–342 (LFLL…LPAS), 421–441 (ILNI…YSLM), and 447–467 (HQTI…FKLL).

This sequence belongs to the TMEM39 family.

The protein resides in the endoplasmic reticulum membrane. May protect the cells against DNA damage caused by exposure to the cold-warming stress and facilitates tissue damage repair during the recovery phase. The sequence is that of Transmembrane protein 39B from Homo sapiens (Human).